The following is a 60-amino-acid chain: Venom protein 4.1 (60 aa).

The first 26 residues, 1–26 (MKALCAILLVLFACSVMFEHFSISTA), serve as a signal peptide directing secretion.

This sequence belongs to the non-disulfide-bridged peptide (NDBP) superfamily. In terms of tissue distribution, expressed by the venom gland.

It is found in the secreted. The sequence is that of Venom protein 4.1 from Lychas mucronatus (Chinese swimming scorpion).